The primary structure comprises 228 residues: Urease accessory protein UreF 1 (228 aa).

Belongs to the UreF family. As to quaternary structure, ureD, UreF and UreG form a complex that acts as a GTP-hydrolysis-dependent molecular chaperone, activating the urease apoprotein by helping to assemble the nickel containing metallocenter of UreC. The UreE protein probably delivers the nickel.

The protein resides in the cytoplasm. In terms of biological role, required for maturation of urease via the functional incorporation of the urease nickel metallocenter. The sequence is that of Urease accessory protein UreF 1 from Brucella canis (strain ATCC 23365 / NCTC 10854 / RM-666).